Consider the following 163-residue polypeptide: Nucleotide-binding protein BBR47_25280 (163 aa).

The protein belongs to the YajQ family.

Its function is as follows. Nucleotide-binding protein. This is Nucleotide-binding protein BBR47_25280 from Brevibacillus brevis (strain 47 / JCM 6285 / NBRC 100599).